The following is a 985-amino-acid chain: Disease resistance protein At4g27190 (985 aa).

Positions 24–88 form a coiled coil; sequence ANAIKFKSNV…ISKARLKLEE (65 aa). Residues 167–429 enclose the NB-ARC domain; the sequence is IGVWGMGGVG…MAEGFMEELG (263 aa). 171 to 178 is a binding site for ATP; it reads GMGGVGKT. 6 LRR repeats span residues 502-523, 526-547, 551-572, 575-597, 598-620, and 621-643; these read SLRRVSLMNNKLESLPDLVEEF, KTSVLLLQGNFLLKEVPIGFLQ, TLRILNLSGTRIKSFPSCSLLR, SLHSLFLRDCFKLVKLPSLETLA, KLELLDLCGTHILEFPRGLEELK, and RFRHLDLSRTLHLESIPARVVSR.

Belongs to the disease resistance NB-LRR family.

Disease resistance protein. This chain is Disease resistance protein At4g27190, found in Arabidopsis thaliana (Mouse-ear cress).